Consider the following 258-residue polypeptide: Ribosomal RNA large subunit methyltransferase E (258 aa).

Gly-58, Trp-60, Asp-78, Asp-96, and Asp-120 together coordinate S-adenosyl-L-methionine. Lys-160 serves as the catalytic Proton acceptor.

The protein belongs to the class I-like SAM-binding methyltransferase superfamily. RNA methyltransferase RlmE family.

Its subcellular location is the cytoplasm. It carries out the reaction uridine(2552) in 23S rRNA + S-adenosyl-L-methionine = 2'-O-methyluridine(2552) in 23S rRNA + S-adenosyl-L-homocysteine + H(+). In terms of biological role, specifically methylates the uridine in position 2552 of 23S rRNA at the 2'-O position of the ribose in the fully assembled 50S ribosomal subunit. In Methanococcus maripaludis (strain C5 / ATCC BAA-1333), this protein is Ribosomal RNA large subunit methyltransferase E.